Reading from the N-terminus, the 417-residue chain is Queuine tRNA-ribosyltransferase accessory subunit 2 (417 aa).

Cys324, Cys326, Cys329, and His355 together coordinate Zn(2+).

This sequence belongs to the queuine tRNA-ribosyltransferase family. QTRT2 subfamily. In terms of assembly, heterodimer of a catalytic subunit and an accessory subunit. Requires Zn(2+) as cofactor.

The protein resides in the cytoplasm. Its function is as follows. Non-catalytic subunit of the queuine tRNA-ribosyltransferase (TGT) that catalyzes the base-exchange of a guanine (G) residue with queuine (Q) at position 34 (anticodon wobble position) in tRNAs with GU(N) anticodons (tRNA-Asp, -Asn, -His and -Tyr), resulting in the hypermodified nucleoside queuosine (7-(((4,5-cis-dihydroxy-2-cyclopenten-1-yl)amino)methyl)-7-deazaguanosine). The sequence is that of Queuine tRNA-ribosyltransferase accessory subunit 2 from Drosophila persimilis (Fruit fly).